The following is a 231-amino-acid chain: Uracil-DNA glycosylase (231 aa).

The active-site Proton acceptor is Asp70.

The protein belongs to the uracil-DNA glycosylase (UDG) superfamily. UNG family.

Its subcellular location is the cytoplasm. The catalysed reaction is Hydrolyzes single-stranded DNA or mismatched double-stranded DNA and polynucleotides, releasing free uracil.. Excises uracil residues from the DNA which can arise as a result of misincorporation of dUMP residues by DNA polymerase or due to deamination of cytosine. The polypeptide is Uracil-DNA glycosylase (Pseudomonas fluorescens (strain Pf0-1)).